The primary structure comprises 486 residues: Differentially expressed in FDCP 8 homolog (486 aa).

The interval 1-26 is disordered; that stretch reads MSSWCSSEDAHNQSSTPSTRSRKSSW. Phorbol-ester/DAG-type zinc fingers lie at residues 160 to 212 and 393 to 459; these read GHEF…KRVC and IHTV…SLNC.

The protein belongs to the DEF8 family.

The sequence is that of Differentially expressed in FDCP 8 homolog from Caenorhabditis elegans.